The primary structure comprises 181 residues: Adenylate kinase (181 aa).

Residue 10–15 (GAGKGT) coordinates ATP. Residues 30 to 59 (STGDLFRDNITNETELGVEAKRYLDAGDLV) form an NMP region. AMP-binding positions include Thr31, Arg36, 57–59 (DLV), 85–88 (GYPR), and Gln92. The LID stretch occupies residues 126–132 (GRGRADD). ATP is bound at residue Arg127. Residues Arg129 and Arg140 each contribute to the AMP site. Gly166 is an ATP binding site.

The protein belongs to the adenylate kinase family. As to quaternary structure, monomer.

The protein localises to the cytoplasm. The enzyme catalyses AMP + ATP = 2 ADP. It functions in the pathway purine metabolism; AMP biosynthesis via salvage pathway; AMP from ADP: step 1/1. In terms of biological role, catalyzes the reversible transfer of the terminal phosphate group between ATP and AMP. Plays an important role in cellular energy homeostasis and in adenine nucleotide metabolism. The protein is Adenylate kinase of Mycobacterium sp. (strain MCS).